A 156-amino-acid chain; its full sequence is Small ribosomal subunit protein uS7 (156 aa).

Belongs to the universal ribosomal protein uS7 family. In terms of assembly, part of the 30S ribosomal subunit. Contacts proteins S9 and S11.

One of the primary rRNA binding proteins, it binds directly to 16S rRNA where it nucleates assembly of the head domain of the 30S subunit. Is located at the subunit interface close to the decoding center, probably blocks exit of the E-site tRNA. The protein is Small ribosomal subunit protein uS7 of Thermoanaerobacter pseudethanolicus (strain ATCC 33223 / 39E) (Clostridium thermohydrosulfuricum).